The primary structure comprises 620 residues: DNA mismatch repair protein MutL (620 aa).

This sequence belongs to the DNA mismatch repair MutL/HexB family.

Functionally, this protein is involved in the repair of mismatches in DNA. It is required for dam-dependent methyl-directed DNA mismatch repair. May act as a 'molecular matchmaker', a protein that promotes the formation of a stable complex between two or more DNA-binding proteins in an ATP-dependent manner without itself being part of a final effector complex. The polypeptide is DNA mismatch repair protein MutL (Clostridium tetani (strain Massachusetts / E88)).